Here is a 469-residue protein sequence, read N- to C-terminus: Glutamate--tRNA ligase (469 aa).

The short motif at 9–19 (PSPTGFLHVGG) is the 'HIGH' region element. The Zn(2+) site is built by cysteine 98, cysteine 100, cysteine 125, and aspartate 127. The 'KMSKS' region motif lies at 236–240 (KLSKR). Residue lysine 239 coordinates ATP.

This sequence belongs to the class-I aminoacyl-tRNA synthetase family. Glutamate--tRNA ligase type 1 subfamily. In terms of assembly, monomer. Zn(2+) is required as a cofactor.

Its subcellular location is the cytoplasm. The catalysed reaction is tRNA(Glu) + L-glutamate + ATP = L-glutamyl-tRNA(Glu) + AMP + diphosphate. Its function is as follows. Catalyzes the attachment of glutamate to tRNA(Glu) in a two-step reaction: glutamate is first activated by ATP to form Glu-AMP and then transferred to the acceptor end of tRNA(Glu). The sequence is that of Glutamate--tRNA ligase from Shewanella halifaxensis (strain HAW-EB4).